We begin with the raw amino-acid sequence, 337 residues long: Glyceraldehyde-3-phosphate dehydrogenase 1 (337 aa).

Residues 11-12 (RI), D33, and R78 contribute to the NAD(+) site. Residues 149 to 151 (SCT), T180, 209 to 210 (TG), and R232 contribute to the D-glyceraldehyde 3-phosphate site. C150 functions as the Nucleophile in the catalytic mechanism. N318 lines the NAD(+) pocket.

The protein belongs to the glyceraldehyde-3-phosphate dehydrogenase family. In terms of assembly, homotetramer.

It is found in the cytoplasm. The enzyme catalyses D-glyceraldehyde 3-phosphate + phosphate + NAD(+) = (2R)-3-phospho-glyceroyl phosphate + NADH + H(+). The protein operates within carbohydrate degradation; glycolysis; pyruvate from D-glyceraldehyde 3-phosphate: step 1/5. This chain is Glyceraldehyde-3-phosphate dehydrogenase 1 (gpd1), found in Agaricus bisporus (White button mushroom).